A 226-amino-acid polypeptide reads, in one-letter code: MGHKVNTLSNRLGLIVGWQSLWYSHYPERIKEDFKIRKYLENRLSKANISRIYIERSLNRVIITISSSRPSIIIGKGGSEIDKLKKELNIFIYKKIQINIFEIKKPELDAVLVSKSIASQLENRGSYKKAIKICISAALQVNAEGIKIKISGRLNGAEMARKETYKEGRIPLSTFRADIDYHMTEAHTNYGIIGIKVWIMKGEIYGKKNLFNIFKLKYKKKKVYSD.

The KH type-2 domain maps to 36 to 104; it reads IRKYLENRLS…KIQINIFEIK (69 aa).

Belongs to the universal ribosomal protein uS3 family. As to quaternary structure, part of the 30S ribosomal subunit. Forms a tight complex with proteins S10 and S14.

Binds the lower part of the 30S subunit head. Binds mRNA in the 70S ribosome, positioning it for translation. The sequence is that of Small ribosomal subunit protein uS3 from Karelsulcia muelleri (strain GWSS) (Sulcia muelleri).